The primary structure comprises 110 residues: Integration host factor subunit alpha (110 aa).

The protein belongs to the bacterial histone-like protein family. Heterodimer of an alpha and a beta chain.

Functionally, this protein is one of the two subunits of integration host factor, a specific DNA-binding protein that functions in genetic recombination as well as in transcriptional and translational control. The sequence is that of Integration host factor subunit alpha from Bdellovibrio bacteriovorus (strain ATCC 15356 / DSM 50701 / NCIMB 9529 / HD100).